The primary structure comprises 265 residues: tRNA pseudouridine synthase A (265 aa).

Residue Asp53 is the Nucleophile of the active site. Tyr111 lines the substrate pocket.

The protein belongs to the tRNA pseudouridine synthase TruA family. Homodimer.

The enzyme catalyses uridine(38/39/40) in tRNA = pseudouridine(38/39/40) in tRNA. Its function is as follows. Formation of pseudouridine at positions 38, 39 and 40 in the anticodon stem and loop of transfer RNAs. This is tRNA pseudouridine synthase A from Acinetobacter baumannii (strain ACICU).